The sequence spans 75 residues: DNA-directed RNA polymerase subunit omega (75 aa).

This sequence belongs to the RNA polymerase subunit omega family. The RNAP catalytic core consists of 2 alpha, 1 beta, 1 beta' and 1 omega subunit. When a sigma factor is associated with the core the holoenzyme is formed, which can initiate transcription.

The catalysed reaction is RNA(n) + a ribonucleoside 5'-triphosphate = RNA(n+1) + diphosphate. In terms of biological role, promotes RNA polymerase assembly. Latches the N- and C-terminal regions of the beta' subunit thereby facilitating its interaction with the beta and alpha subunits. This is DNA-directed RNA polymerase subunit omega from Thermosipho melanesiensis (strain DSM 12029 / CIP 104789 / BI429).